The primary structure comprises 1498 residues: Rap guanine nucleotide exchange factor 2 (1498 aa).

Disordered regions lie at residues 40–59 (HVSSSHSGCSITSDSGSSSL) and 68–101 (SEAGDMDLSGLPETAVDSEDDDDEEDIERASDPL). Positions 83 to 94 (VDSEDDDDEEDI) are enriched in acidic residues. Residue 135–252 (AFANMTMSVR…QKVEEEGEIV (118 aa)) coordinates a nucleoside 3',5'-cyclic phosphate. The N-terminal Ras-GEF domain maps to 267 to 380 (KGHIVIKGTS…RLLNIACAAK (114 aa)). The PDZ domain occupies 385 to 468 (LMTLTKPSRE…LSITVKTNLF (84 aa)). Phosphoserine is present on serine 501. The Ras-associating domain occupies 606 to 692 (PDQVLRVFKA…GRYYLKNNME (87 aa)). Threonine 644 bears the Phosphothreonine mark. The Ras-GEF domain maps to 717–944 (STVEVATQLS…SQGSTNATVL (228 aa)). 11 positions are modified to phosphoserine: serine 806, serine 930, serine 933, serine 1022, serine 1079, serine 1088, serine 1094, serine 1115, serine 1119, serine 1158, and serine 1175. Residues 1002–1048 (PATNTLPKNPGDKKPVKSETSPVAPRAGSQQKAQAQPPPPQPQPQHK) are disordered. Residues 1094-1159 (SLERHKKQAE…RSSIVSNSSF (66 aa)) are disordered. 2 stretches are compositionally biased toward low complexity: residues 1110–1124 (SSQLSSPPTSPQSSP) and 1140–1159 (SDSGHSEISSRSSIVSNSSF). 3 disordered regions span residues 1224–1257 (STEELSQDQGDRASLDAADSGRGSWTSCSSGSHD), 1304–1371 (TKYN…TKPV), and 1392–1498 (EGRY…VSAV). 2 stretches are compositionally biased toward polar residues: residues 1246 to 1257 (GSWTSCSSGSHD) and 1306 to 1330 (YNRQNQSRESLEQAQSRASWASSTG). Residues 1354-1365 (EAESSSVTSVTT) are compositionally biased toward low complexity. Positions 1487 to 1498 (TEEDEDEQVSAV) are enriched in acidic residues.

Belongs to the RAPGEF2 family. Found in a complex, at least composed of KIDINS220, MAGI2, NTRK1 and RAPGEF2; the complex is mainly formed at late endosomes in a neuronal growth factor (NGF)-dependent manner. Interacts (via C-terminal domain) with NEDD4 (via WW domains); this interaction leads to ubiquitination and degradation via the proteasome pathway in a cAMP-independent manner. Interacts with MAGI1 (via PDZ domain). Interacts with ADRB1 (via C-terminal PDZ motif); the interaction is direct. Interacts (via Ras-associating domain) with RAP1A (via GTP-bound active form). Interacts weakly with HRAS (via GDP- and GTP-bound forms). Interacts (via C-terminal domain) with MAGI2 (via PDZ and WW domains). Interacts with CDH1, CTNNB1 and TJP1. Ubiquitinated by NEDD4, leading to proteasomal degradation. In terms of processing, phosphorylation by PLK2 promotes its activity.

Its subcellular location is the cell junction. The protein resides in the cytoplasm. The protein localises to the perinuclear region. It is found in the cell membrane. It localises to the late endosome. In terms of biological role, functions as a guanine nucleotide exchange factor (GEF), which activates Rap and Ras family of small GTPases by exchanging bound GDP for free GTP in a cAMP-dependent manner. Serves as a link between cell surface receptors and Rap/Ras GTPases in intracellular signaling cascades. Also acts as an effector for Rap1 by direct association with Rap1-GTP thereby leading to the amplification of Rap1-mediated signaling. Shows weak activity on HRAS. It is controversial whether RAPGEF2 binds cAMP and cGMP or not. Its binding to ligand-activated beta-1 adrenergic receptor ADRB1 leads to the Ras activation through the G(s)-alpha signaling pathway. Involved in the cAMP-induced Ras and Erk1/2 signaling pathway that leads to sustained inhibition of long term melanogenesis by reducing dendrite extension and melanin synthesis. Also provides inhibitory signals for cell proliferation of melanoma cells and promotes their apoptosis in a cAMP-independent nanner. Regulates cAMP-induced neuritogenesis by mediating the Rap1/B-Raf/ERK signaling through a pathway that is independent on both PKA and RAPGEF3/RAPGEF4. Involved in neuron migration and in the formation of the major forebrain fiber connections forming the corpus callosum, the anterior commissure and the hippocampal commissure during brain development. Involved in neuronal growth factor (NGF)-induced sustained activation of Rap1 at late endosomes and in brain-derived neurotrophic factor (BDNF)-induced axon outgrowth of hippocampal neurons. Plays a role in the regulation of embryonic blood vessel formation and in the establishment of basal junction integrity and endothelial barrier function. May be involved in the regulation of the vascular endothelial growth factor receptor KDR and cadherin CDH5 expression at allantois endothelial cell-cell junctions. The sequence is that of Rap guanine nucleotide exchange factor 2 (RAPGEF2) from Canis lupus familiaris (Dog).